A 1085-amino-acid polypeptide reads, in one-letter code: Ubiquitin carboxyl-terminal hydrolase 36 (1085 aa).

The segment covering 23–36 has biased composition (low complexity); that stretch reads GGNSSAAGSSADQA. Disordered stretches follow at residues 23–47 and 104–149; these read GGNS…GSLQ and KVVG…PKPK. The USP domain maps to 173–481; it reads TGMINVGNTC…NAYIMFYELD (309 aa). The active-site Nucleophile is the Cys182. Residue His440 is the Proton acceptor of the active site. Disordered regions lie at residues 489-730, 745-888, 963-1030, and 1043-1085; these read AANR…NNSK, KSAD…ELLK, EQRQ…FYNQ, and KFNR…QQQS. A compositionally biased stretch (low complexity) spans 503–518; that stretch reads STTPVPATTVSSPSPT. A phosphoserine mark is found at Ser514 and Ser516. The span at 532 to 542 shows a compositional bias: polar residues; the sequence is GYSNGNAQKTA. The segment covering 588-609 has biased composition (low complexity); sequence NGNKSSSTSSNNSSSSNHKSIN. A compositionally biased stretch (basic and acidic residues) spans 642–651; it reads MTDDHTEKPK. 2 positions are modified to phosphothreonine: Thr660 and Thr664. 2 positions are modified to phosphoserine: Ser674 and Ser676. The segment covering 705–730 has biased composition (polar residues); the sequence is TNGHSKTNGSLTNGSASSSVHVNNSK. Ser749 bears the Phosphoserine mark. Over residues 749–758 the composition is skewed to acidic residues; sequence SDDDDDEEES. Over residues 768–778 the composition is skewed to low complexity; sequence PQKQSQSQSKA. A compositionally biased stretch (pro residues) spans 779–788; sequence PPSPKTPPSP. Ser781 carries the post-translational modification Phosphoserine. At Thr784 the chain carries Phosphothreonine. Phosphoserine is present on Ser787. Over residues 805-818 the composition is skewed to acidic residues; that stretch reads EVDDIDDDDDEEEE. The segment covering 822-844 has biased composition (polar residues); the sequence is KIQTPSKTHRNPFSSSKPSTDSP. At Thr825 the chain carries Phosphothreonine. Ser843 carries the post-translational modification Phosphoserine. Thr846 bears the Phosphothreonine mark. Polar residues predominate over residues 859–884; sequence PVKSHQQPRVGNGYQSEATSNGSTIN. Low complexity-rich tracts occupy residues 987–998 and 1056–1066; these read SGSAKGNNASNS and QQQRALQRHLA.

This sequence belongs to the peptidase C19 family. In terms of assembly, interacts with atms/PAF1, but not with CycT.

It is found in the nucleus. It localises to the nucleolus. The enzyme catalyses Thiol-dependent hydrolysis of ester, thioester, amide, peptide and isopeptide bonds formed by the C-terminal Gly of ubiquitin (a 76-residue protein attached to proteins as an intracellular targeting signal).. Required for maintaining multiple types of adult stem cells, including male and female germline, epithelial follicle cell and intestinal stem cells. May function as a transcriptional repressor by continually deubiquiting histone H2B at the promoters of genes critical for cellular differentiation, thereby preventing histone H3 'Lys-4' trimethylation (H3K4). Controls selective autophagy activation by ubiquitinated proteins. This chain is Ubiquitin carboxyl-terminal hydrolase 36 (Usp36), found in Drosophila erecta (Fruit fly).